The following is a 101-amino-acid chain: Large ribosomal subunit protein bL28 (101 aa).

The protein belongs to the bacterial ribosomal protein bL28 family.

This is Large ribosomal subunit protein bL28 from Caulobacter sp. (strain K31).